A 148-amino-acid chain; its full sequence is Snaclec stejaggregin-A subunit beta-2 (148 aa).

An N-terminal signal peptide occupies residues 1–23 (MGQFIFVSFGLLVVLLSLSGAGA). A disulfide bridge links C27 with C38. The 112-residue stretch at 34–145 (YDLYCYKVFK…CSRTHYVVCK (112 aa)) folds into the C-type lectin domain. Residues N47 and N78 are each glycosylated (N-linked (GlcNAc...) asparagine). 2 cysteine pairs are disulfide-bonded: C55/C144 and C121/C136.

Belongs to the snaclec family. In terms of assembly, heteromultimer; disulfide-linked. In terms of tissue distribution, expressed by the venom gland.

The protein localises to the secreted. In terms of biological role, interferes with one step of hemostasis (modulation of platelet aggregation, or coagulation cascade, for example). This Trimeresurus stejnegeri (Chinese green tree viper) protein is Snaclec stejaggregin-A subunit beta-2.